The following is a 153-amino-acid chain: Putative ATP synthase subunit f, mitochondrial (153 aa).

This sequence belongs to the ATPase F chain family. Subunit of the F-type ATPase which has 2 components, CF(1) - the catalytic core - and CF(0) - the membrane proton channel.

It localises to the mitochondrion membrane. Mitochondrial membrane ATP synthase (F(1)F(0) ATP synthase or Complex V) produces ATP from ADP in the presence of a proton gradient across the membrane which is generated by electron transport complexes of the respiratory chain. F-type ATPases consist of two structural domains, F(1) - containing the extramembraneous catalytic core and F(0) - containing the membrane proton channel, linked together by a central stalk and a peripheral stalk. During catalysis, ATP synthesis in the catalytic domain of F(1) is coupled via a rotary mechanism of the central stalk subunits to proton translocation. Part of the complex F(0) domain. Minor subunit located with subunit a in the membrane. The protein is Putative ATP synthase subunit f, mitochondrial of Caenorhabditis elegans.